A 358-amino-acid polypeptide reads, in one-letter code: Putative zinc metalloprotease RC0203 (358 aa).

Position 18 (histidine 18) interacts with Zn(2+). Glutamate 19 is an active-site residue. Histidine 22 contacts Zn(2+). 4 helical membrane-spanning segments follow: residues 52 to 71, 97 to 119, 285 to 307, and 332 to 351; these read GVRW…IYGY, FLIV…AGFY, YLLF…IPVL, and ILLQ…AVSN. The PDZ domain occupies 102–186; it reads AGPLINYLLA…STLTIERKSE (85 aa).

It belongs to the peptidase M50B family. The cofactor is Zn(2+).

The protein localises to the cell inner membrane. This Rickettsia conorii (strain ATCC VR-613 / Malish 7) protein is Putative zinc metalloprotease RC0203.